The sequence spans 347 residues: Aspartate carbamoyltransferase catalytic subunit (347 aa).

Carbamoyl phosphate is bound by residues arginine 75 and threonine 76. Lysine 103 serves as a coordination point for L-aspartate. 3 residues coordinate carbamoyl phosphate: arginine 125, histidine 153, and glutamine 156. L-aspartate contacts are provided by arginine 193 and arginine 247. Glycine 288 and proline 289 together coordinate carbamoyl phosphate.

The protein belongs to the aspartate/ornithine carbamoyltransferase superfamily. ATCase family. Heterododecamer (2C3:3R2) of six catalytic PyrB chains organized as two trimers (C3), and six regulatory PyrI chains organized as three dimers (R2).

The catalysed reaction is carbamoyl phosphate + L-aspartate = N-carbamoyl-L-aspartate + phosphate + H(+). It functions in the pathway pyrimidine metabolism; UMP biosynthesis via de novo pathway; (S)-dihydroorotate from bicarbonate: step 2/3. Catalyzes the condensation of carbamoyl phosphate and aspartate to form carbamoyl aspartate and inorganic phosphate, the committed step in the de novo pyrimidine nucleotide biosynthesis pathway. In Erythrobacter litoralis (strain HTCC2594), this protein is Aspartate carbamoyltransferase catalytic subunit.